Consider the following 119-residue polypeptide: Large ribosomal subunit protein uL18 (119 aa).

Belongs to the universal ribosomal protein uL18 family. In terms of assembly, part of the 50S ribosomal subunit; part of the 5S rRNA/L5/L18/L25 subcomplex. Contacts the 5S and 23S rRNAs.

This is one of the proteins that bind and probably mediate the attachment of the 5S RNA into the large ribosomal subunit, where it forms part of the central protuberance. In Nitratidesulfovibrio vulgaris (strain DP4) (Desulfovibrio vulgaris), this protein is Large ribosomal subunit protein uL18.